We begin with the raw amino-acid sequence, 158 residues long: Protein-export protein SecB (158 aa).

Belongs to the SecB family. In terms of assembly, homotetramer, a dimer of dimers. One homotetramer interacts with 1 SecA dimer.

It localises to the cytoplasm. Its function is as follows. One of the proteins required for the normal export of preproteins out of the cell cytoplasm. It is a molecular chaperone that binds to a subset of precursor proteins, maintaining them in a translocation-competent state. It also specifically binds to its receptor SecA. This chain is Protein-export protein SecB, found in Anaplasma phagocytophilum (strain HZ).